Here is a 387-residue protein sequence, read N- to C-terminus: Dual-specificity RNA methyltransferase RlmN (387 aa).

Glu93 (proton acceptor) is an active-site residue. A Radical SAM core domain is found at 99–343; it reads EENRGTLCIS…TTVRKTRGDD (245 aa). Cysteines 106 and 348 form a disulfide. The [4Fe-4S] cluster site is built by Cys113, Cys117, and Cys120. Residues 172 to 173, Ser204, 226 to 228, and Asn305 each bind S-adenosyl-L-methionine; these read GE and SLH. Cys348 functions as the S-methylcysteine intermediate in the catalytic mechanism.

This sequence belongs to the radical SAM superfamily. RlmN family. Requires [4Fe-4S] cluster as cofactor.

The protein localises to the cytoplasm. It carries out the reaction adenosine(2503) in 23S rRNA + 2 reduced [2Fe-2S]-[ferredoxin] + 2 S-adenosyl-L-methionine = 2-methyladenosine(2503) in 23S rRNA + 5'-deoxyadenosine + L-methionine + 2 oxidized [2Fe-2S]-[ferredoxin] + S-adenosyl-L-homocysteine. The enzyme catalyses adenosine(37) in tRNA + 2 reduced [2Fe-2S]-[ferredoxin] + 2 S-adenosyl-L-methionine = 2-methyladenosine(37) in tRNA + 5'-deoxyadenosine + L-methionine + 2 oxidized [2Fe-2S]-[ferredoxin] + S-adenosyl-L-homocysteine. Functionally, specifically methylates position 2 of adenine 2503 in 23S rRNA and position 2 of adenine 37 in tRNAs. m2A2503 modification seems to play a crucial role in the proofreading step occurring at the peptidyl transferase center and thus would serve to optimize ribosomal fidelity. The polypeptide is Dual-specificity RNA methyltransferase RlmN (Janthinobacterium sp. (strain Marseille) (Minibacterium massiliensis)).